Here is a 524-residue protein sequence, read N- to C-terminus: M-phase inducer phosphatase 1 (524 aa).

The Phosphodegron motif lies at 74-84; that stretch reads MGSSESTDSGF. Ser-76 carries the phosphoserine; by CHEK1 modification. Ser-79, Ser-82, and Ser-88 each carry phosphoserine; by NEK11. Ser-107 carries the post-translational modification Phosphoserine. Ser-124 carries the phosphoserine; by CHEK1 and CHEK2 modification. Positions 141 to 143 match the KEN box motif; sequence KEN. The residue at position 178 (Ser-178) is a Phosphoserine; by CHEK1. Residues 264–317 form a disordered region; sequence LCSSSTRSVLKRPERSQEESPPGSTKRRKSMSGASPKESTNPEKAHETLHQSLS. Phosphoserine; by CHEK1 and CHEK2 is present on residues Ser-279 and Ser-293. The segment covering 303–312 has biased composition (basic and acidic residues); it reads TNPEKAHETL. Ser-321 bears the Phosphoserine mark. Positions 376-482 constitute a Rhodanese domain; the sequence is LIKEFVIIDC…FFMKCQSYCE (107 aa). Residue Cys-431 is part of the active site. Thr-507 carries the phosphothreonine; by CHEK1 modification. Phosphoserine; by PLK3 occurs at positions 513 and 519.

Belongs to the MPI phosphatase family. Interacts with CCNB1/cyclin B1. Interacts with YWHAE/14-3-3 epsilon when phosphorylated. Interacts with CUL1 specifically when CUL1 is neddylated and active. Interacts with BTRC/BTRCP1 and FBXW11/BTRCP2. Interactions with CUL1, BTRC and FBXW11 are enhanced upon DNA damage. Interacts with CHEK2; mediates CDC25A phosphorylation and degradation in response to infrared-induced DNA damages. Interacts with HSP90AB1; prevents heat shock-mediated CDC25A degradation and contributes to cell cycle progression. In terms of processing, phosphorylated by CHEK1 on Ser-76, Ser-124, Ser-178, Ser-279, Ser-293 and Thr-507 during checkpoint mediated cell cycle arrest. Also phosphorylated by CHEK2 on Ser-124, Ser-279, and Ser-293 during checkpoint mediated cell cycle arrest. Phosphorylation on Ser-178 and Thr-507 creates binding sites for YWHAE/14-3-3 epsilon which inhibits CDC25A. Phosphorylation on Ser-76, Ser-124, Ser-178, Ser-279 and Ser-293 may also promote ubiquitin-dependent proteolysis of CDC25A by the SCF complex. Phosphorylation of CDC25A at Ser-76 by CHEK1 primes it for subsequent phosphorylation at Ser-79, Ser-82 and Ser-88 by NEK11. Phosphorylation by NEK11 is required for BTRC-mediated polyubiquitination and degradation. Phosphorylation by PIM1 leads to an increase in phosphatase activity. Phosphorylated by PLK3 following DNA damage, leading to promote its ubiquitination and degradation. Post-translationally, ubiquitinated by the anaphase promoting complex/cyclosome (APC/C) ubiquitin ligase complex that contains FZR1/CDH1 during G1 phase leading to its degradation by the proteasome. Ubiquitinated by a SCF complex containing BTRC and FBXW11 during S phase leading to its degradation by the proteasome. Deubiquitination by USP17L2/DUB3 leads to its stabilization.

The enzyme catalyses O-phospho-L-tyrosyl-[protein] + H2O = L-tyrosyl-[protein] + phosphate. Stimulated by B-type cyclins. Stimulated by PIM1-mediated phosphorylation. Functionally, tyrosine protein phosphatase which functions as a dosage-dependent inducer of mitotic progression. Directly dephosphorylates CDK1 and stimulates its kinase activity. Also dephosphorylates CDK2 in complex with cyclin-E, in vitro. This chain is M-phase inducer phosphatase 1 (CDC25A), found in Homo sapiens (Human).